A 49-amino-acid polypeptide reads, in one-letter code: Large ribosomal subunit protein bL33 (49 aa).

This sequence belongs to the bacterial ribosomal protein bL33 family.

This is Large ribosomal subunit protein bL33 from Carboxydothermus hydrogenoformans (strain ATCC BAA-161 / DSM 6008 / Z-2901).